A 325-amino-acid chain; its full sequence is Cytosolic Fe-S cluster assembly factor Nubp1 homolog (325 aa).

Residues 1–26 (MSSGADVPSDAPAHCPGTQSDDAGKA) form a disordered region. [4Fe-4S] cluster is bound by residues Cys15, Cys29, Cys32, and Cys38. An ATP-binding site is contributed by 68 to 75 (GKGGVGKS). Residues Cys243 and Cys246 each coordinate [4Fe-4S] cluster.

This sequence belongs to the Mrp/NBP35 ATP-binding proteins family. NUBP1/NBP35 subfamily. In terms of assembly, heterotetramer of 2 Nubp1 and 2 Nubp2 chains. The cofactor is [4Fe-4S] cluster.

Its subcellular location is the cytoplasm. Functionally, component of the cytosolic iron-sulfur (Fe/S) protein assembly (CIA) machinery. Required for maturation of extramitochondrial Fe-S proteins. The Nubp1-Nubp2 heterotetramer forms a Fe-S scaffold complex, mediating the de novo assembly of an Fe-S cluster and its transfer to target apoproteins. In Anopheles gambiae (African malaria mosquito), this protein is Cytosolic Fe-S cluster assembly factor Nubp1 homolog.